Reading from the N-terminus, the 177-residue chain is Large ribosomal subunit protein uL6 (177 aa).

Belongs to the universal ribosomal protein uL6 family. Part of the 50S ribosomal subunit.

Its function is as follows. This protein binds to the 23S rRNA, and is important in its secondary structure. It is located near the subunit interface in the base of the L7/L12 stalk, and near the tRNA binding site of the peptidyltransferase center. The protein is Large ribosomal subunit protein uL6 of Histophilus somni (strain 129Pt) (Haemophilus somnus).